We begin with the raw amino-acid sequence, 684 residues long: Cleavage and polyadenylation specificity factor subunit 3 (684 aa).

Ser2 is modified (N-acetylserine). Zn(2+) is bound by residues His71, His73, Asp75, His76, His158, and Asp179. The active-site Proton donor is His396. His418 lines the Zn(2+) pocket. Residues Lys462, Lys465, and Lys545 each participate in a glycyl lysine isopeptide (Lys-Gly) (interchain with G-Cter in SUMO) cross-link. Phosphoserine is present on Ser659. The residue at position 681 (Thr681) is a Phosphothreonine.

The protein belongs to the metallo-beta-lactamase superfamily. RNA-metabolizing metallo-beta-lactamase-like family. CPSF3 subfamily. Component of the cleavage and polyadenylation specificity factor (CPSF) complex, composed of CPSF1, CPSF2, CPSF3, CPSF4 and FIP1L1. Interacts with CPSF2, CSTF2 and SYMPK. Interacts with TUT1; the interaction is direct and mediates the recruitment of the CPSF complex on the 3'UTR of pre-mRNAs. Interacts with WDR33. Interacts with ZC3H3. The cofactor is Zn(2+). Sumoylated on Lys-462, Lys-465 and Lys-545, preferentially by SUMO3.

It localises to the nucleus. In terms of biological role, component of the cleavage and polyadenylation specificity factor (CPSF) complex that plays a key role in pre-mRNA 3'-end formation, recognizing the AAUAAA signal sequence and interacting with poly(A) polymerase and other factors to bring about cleavage and poly(A) addition. Has endonuclease activity, and functions as an mRNA 3'-end-processing endonuclease. Also involved in the histone 3'-end pre-mRNA processing. U7 snRNP-dependent protein that induces both the 3'-endoribonucleolytic cleavage of histone pre-mRNAs and acts as a 5' to 3' exonuclease for degrading the subsequent downstream cleavage product (DCP) of mature histone mRNAs. Cleavage occurs after the 5'-ACCCA-3' sequence in the histone pre-mRNA leaving a 3'hydroxyl group on the upstream fragment containing the stem loop (SL) and 5' phosphate on the downstream cleavage product (DCP) starting with CU nucleotides. The U7-dependent 5' to 3' exonuclease activity is processive and degrades the DCP RNA substrate even after complete removal of the U7-binding site. Binds to the downstream cleavage product (DCP) of histone pre-mRNAs and the cleaved DCP RNA substrate in a U7 snRNP dependent manner. Required for entering/progressing through S-phase of the cell cycle. Required for the selective processing of microRNAs (miRNAs) during embryonic stem cell differentiation via its interaction with ISY1. Required for the biogenesis of all miRNAs from the pri-miR-17-92 primary transcript except miR-92a. Only required for the biogenesis of miR-290 and miR-96 from the pri-miR-290-295 and pri-miR-96-183 primary transcripts, respectively. The sequence is that of Cleavage and polyadenylation specificity factor subunit 3 (CPSF3) from Homo sapiens (Human).